A 239-amino-acid polypeptide reads, in one-letter code: Fatty acid metabolism regulator protein (239 aa).

Residues 6–74 enclose the HTH gntR-type domain; that stretch reads QSPAGFAEEY…HGKPTKVNNF (69 aa). Positions 34 to 53 form a DNA-binding region, H-T-H motif; the sequence is ERELSELIGVTRTTLREVLQ.

In terms of assembly, homodimer.

It is found in the cytoplasm. Its function is as follows. Multifunctional regulator of fatty acid metabolism. The polypeptide is Fatty acid metabolism regulator protein (Serratia proteamaculans (strain 568)).